A 103-amino-acid polypeptide reads, in one-letter code: Large ribosomal subunit protein uL22c (103 aa).

Belongs to the universal ribosomal protein uL22 family. In terms of assembly, part of the 50S ribosomal subunit.

The protein localises to the plastid. It localises to the chloroplast. Its function is as follows. This protein binds specifically to 23S rRNA. Functionally, the globular domain of the protein is located near the polypeptide exit tunnel on the outside of the subunit, while an extended beta-hairpin is found that lines the wall of the exit tunnel in the center of the 70S ribosome. This chain is Large ribosomal subunit protein uL22c (rpl22), found in Cyanidium caldarium (Red alga).